Reading from the N-terminus, the 372-residue chain is Peptide chain release factor 2 (372 aa).

Gln253 is modified (N5-methylglutamine).

Belongs to the prokaryotic/mitochondrial release factor family. In terms of processing, methylated by PrmC. Methylation increases the termination efficiency of RF2.

The protein localises to the cytoplasm. Functionally, peptide chain release factor 2 directs the termination of translation in response to the peptide chain termination codons UGA and UAA. This Mycolicibacterium gilvum (strain PYR-GCK) (Mycobacterium gilvum (strain PYR-GCK)) protein is Peptide chain release factor 2.